Consider the following 438-residue polypeptide: Ribosomal protein uS12 methylthiotransferase RimO (438 aa).

The 117-residue stretch at 4–120 (HSLFLLSLGC…ILASLGARYR (117 aa)) folds into the MTTase N-terminal domain. [4Fe-4S] cluster contacts are provided by C13, C49, C83, C144, C148, and C151. One can recognise a Radical SAM core domain in the interval 130–359 (LTPSHYAYLK…MELQEAVAES (230 aa)). A TRAM domain is found at 362 to 429 (REFEGKEIEV…AHELYGEIVQ (68 aa)).

Belongs to the methylthiotransferase family. RimO subfamily. [4Fe-4S] cluster is required as a cofactor.

The protein localises to the cytoplasm. The enzyme catalyses L-aspartate(89)-[ribosomal protein uS12]-hydrogen + (sulfur carrier)-SH + AH2 + 2 S-adenosyl-L-methionine = 3-methylsulfanyl-L-aspartate(89)-[ribosomal protein uS12]-hydrogen + (sulfur carrier)-H + 5'-deoxyadenosine + L-methionine + A + S-adenosyl-L-homocysteine + 2 H(+). In terms of biological role, catalyzes the methylthiolation of an aspartic acid residue of ribosomal protein uS12. The chain is Ribosomal protein uS12 methylthiotransferase RimO from Chlorobium chlorochromatii (strain CaD3).